A 190-amino-acid chain; its full sequence is Peptidyl-tRNA hydrolase (190 aa).

Tyr14 lines the tRNA pocket. Residue His19 is the Proton acceptor of the active site. TRNA is bound by residues Tyr64, Asn66, and Asn112.

The protein belongs to the PTH family. Monomer.

It is found in the cytoplasm. It carries out the reaction an N-acyl-L-alpha-aminoacyl-tRNA + H2O = an N-acyl-L-amino acid + a tRNA + H(+). Hydrolyzes ribosome-free peptidyl-tRNAs (with 1 or more amino acids incorporated), which drop off the ribosome during protein synthesis, or as a result of ribosome stalling. Its function is as follows. Catalyzes the release of premature peptidyl moieties from peptidyl-tRNA molecules trapped in stalled 50S ribosomal subunits, and thus maintains levels of free tRNAs and 50S ribosomes. The polypeptide is Peptidyl-tRNA hydrolase (Chlorobium limicola (strain DSM 245 / NBRC 103803 / 6330)).